Here is a 908-residue protein sequence, read N- to C-terminus: Chloride channel protein 2 (908 aa).

The Cytoplasmic portion of the chain corresponds to 1-95 (MAAATAAAAA…RCHKFLVSRV (95 aa)). Residues 24–42 (QYEQTLMYGRYTQELGAFA) are essential for channel gating by both voltage and cell volume. T28 carries the post-translational modification Phosphothreonine. Positions 44 to 57 (EEAARIRLGGPEPW) are modulates channel gating by both voltage and cell volume. Transmembrane regions (helical) follow at residues 96-129 (GEDW…AQQW) and 138-163 (ILLQ…TQIL). Residues 169-173 (GSGIP) carry the Selectivity filter part_1 motif. S170 contacts chloride. Positions 172-179 (IPEMKTIL) form an intramembrane region, helical. 2 helical membrane-spanning segments follow: residues 188 to 206 (LTLK…ALGS) and 213 to 231 (EGPF…SKFL). The Selectivity filter part_2 signature appears at 211 to 215 (GKEGP). 2 intramembrane regions (helical) span residues 247–259 (MLAA…VGCC) and 263–271 (PIGGVLFSI). 5 helical membrane passes run 283–303 (YWRG…LAVW), 329–357 (LPAF…VQVM), 366–385 (FLMR…ISTL), 437–457 (ANVF…SALA), and 465–488 (GAFM…MAAW). The short motif at 465 to 469 (GAFMP) is the Selectivity filter part_3 element. F467 is a binding site for chloride. The segment at residues 505 to 519 (GGYAVVGAAALAGAV) is an intramembrane region (helical). Positions 520 to 521 (TH) form an intramembrane region, note=Loop between two helices. Residues 522–533 (TVSTAVIVFELT) constitute an intramembrane region (helical). The note=Loop between two helices intramembrane region spans 534-538 (GQIAH). The chain crosses the membrane as a helical span at residues 539 to 556 (ILPVMIAVILANAVAQSL). Residues 557–908 (QPSLYDSIIR…TPSDSDDKCQ (352 aa)) are Cytoplasmic-facing. Chloride is bound at residue Y561. In terms of domain architecture, CBS 1 spans 592-650 (MVRDVPHVALSCTFRDLRLALHRTKGRMLALVESPESMILLGSIERSQVVALLGAQLSP). A compositionally biased stretch (basic residues) spans 653-662 (RRQHMQKLRK). The tract at residues 653–722 (RRQHMQKLRK…NSTSLQEGTT (70 aa)) is disordered. Low complexity predominate over residues 666 to 680 (SPPSDQESPPSSETS). Residues 681–690 (IRFQVNTEDS) show a composition bias toward polar residues. Over residues 698-707 (QTHKPLKPAL) the composition is skewed to basic residues. Residues 711-722 (PSNSTSLQEGTT) are compositionally biased toward polar residues. S768 is subject to Phosphoserine. A CBS 2 domain is found at 800-860 (IDPAPFQLVE…GSVTAQGVKV (61 aa)). The Basolateral membrane sorting motif lies at 822–823 (LL). A disordered region spans residues 866–908 (SFRDSATSSSDTETTEVHALWGPRSRHGLPREGTPSDSDDKCQ).

Belongs to the chloride channel (TC 2.A.49) family. ClC-2/CLCN2 subfamily. As to quaternary structure, homodimer. Interacts with auxiliary subunit HEPACAM. Phosphorylated. Activated by dephosphorylation. As to expression, expressed in the adrenal gland and brain. Expressed in intestinal epithelium (at protein level). Expressed in salivary gland (at protein level).

It localises to the cell membrane. The protein resides in the myelin membrane. Its subcellular location is the basolateral cell membrane. The protein localises to the cell projection. It is found in the dendritic spine membrane. It localises to the axon. The enzyme catalyses chloride(in) = chloride(out). It carries out the reaction thiocyanate(in) = thiocyanate(out). It catalyses the reaction bromide(in) = bromide(out). The catalysed reaction is nitrate(in) = nitrate(out). The enzyme catalyses iodide(out) = iodide(in). Its activity is regulated as follows. Common gate kinetics are down-regulated by intracellular ATP. Inhibited by AK-42, a derivative of meclofenamate. Inhibited by Cd(2+). Inhibited by Zn(2+) and PKC activation. Inhibited at acidic pH. CCLN2:HEPACAM channel conductance is up-regulated upon hypo-osmolarity. In terms of biological role, voltage-gated and osmosensitive chloride channel. Forms a homodimeric channel where each subunit has its own ion conduction pathway. Conducts double-barreled currents controlled by two types of gates, two fast glutamate gates that control each subunit independently and a slow common gate that opens and shuts off both subunits simultaneously. Displays inward rectification currents activated upon membrane hyperpolarization and extracellular hypotonicity. Contributes to chloride conductance involved in neuron excitability. In hippocampal neurons, generates a significant part of resting membrane conductance and provides an additional chloride efflux pathway to prevent chloride accumulation in dendrites upon GABA receptor activation. In glia, associates with the auxiliary subunit HEPACAM/GlialCAM at astrocytic processes and myelinated fiber tracts where it may regulate transcellular chloride flux buffering extracellular chloride and potassium concentrations. Regulates aldosterone production in adrenal glands. The opening of CLCN2 channels at hyperpolarized membrane potentials in the glomerulosa causes cell membrane depolarization, activation of voltage-gated calcium channels and increased expression of aldosterone synthase, the rate-limiting enzyme for aldosterone biosynthesis. Contributes to chloride conductance in retinal pigment epithelium involved in phagocytosis of shed photoreceptor outer segments and photoreceptor renewal. Conducts chloride currents at the basolateral membrane of epithelial cells with a role in chloride reabsorption rather than secretion. Permeable to small monovalent anions with chloride &gt; thiocyanate &gt; bromide &gt; nitrate &gt; iodide ion selectivity. The protein is Chloride channel protein 2 (Clcn2) of Mus musculus (Mouse).